The sequence spans 161 residues: Putative pre-16S rRNA nuclease (161 aa).

The protein belongs to the YqgF nuclease family.

It is found in the cytoplasm. In terms of biological role, could be a nuclease involved in processing of the 5'-end of pre-16S rRNA. The protein is Putative pre-16S rRNA nuclease of Bradyrhizobium sp. (strain ORS 278).